We begin with the raw amino-acid sequence, 1525 residues long: MPSAHAFDMRITSDIYKPDQHLPMETMKVCAVTMTEDLQEDDGSSDESDNDEREDHSKTGVSQQRITQNAKFKALLAQRADTGPIHDVSVTHDLPDAQLSTAHLVAKQDLGIGTLDPREYQLELFERAKVQNTIAVLDTGSGKTLIAVLLLKHTLEKELNDRMEGKPHRIAFFLVDSVTLAYQQAAVLRNNLDQSVGHFFGAMGTDLWSKSVWDQHFQKNMVIVCTAEILNQCLLNSYIKMSQINILIFDEAHHTKKDHPYARIIRDSYLEEVYSKRPRIFGMTASPIDTKGDIVDEATRLEKLLDSRIATTSNMSLLRQVARRPVERVWSFNKLEQPFATSLYKHLEDRFGDMACLEGIFRFAWQASSELGRWCSDRAWARALADDVLPKLEGSVRKTANSETSSNVPESAYKEILRITEASEIVKSYAFSSPETFGQLSPKVQVLREELARYFGRQTETKCIVFTQKRYTALILAELFQTLNIPFLRPGVLIGVRSGDLAGMNITFRQQFISLVKFRTGEINCLFATSVAEEGLDIPDCNLVVRFDLYQTLIQYVQSRGRARHFNSTYASMVERGNLEHEQRLLEVQDAEMMQSFCRTLPEDRLLYGFDHDLDTVLQKDEGNRTFRIKSTGAKLTYHSATAILARYASSLQYEKEFSAQVTYVVLPINGAFVCEVILPEKSPIRGLTGSPAMKKSIAKRSAAFDTCLLLRKNKLLDDHFNSIYHRRLPAMRNAKLAITSKRTSQYDMISKPSLWGRKQGMPPKELHGTFITFLPSMQLSHEPAPLLLFTRERLPHFPEFPIFLDDDVETTIITTPLEKQLLLSEKEVDALTVFTLRVFRDVFHKTYDKEPEKMAYWLAPAKVQSSYLPSYDPRQILDWESLTYVRDNDSIPFSTNADPESWVDLFVFDAWDGRCRFFTVGVEHSLTPSSPPPPFVARRRHMNDVMNYCLSLSKNSRAKFLSTCHWDQPVLRAELVRLRRNLLDKMTDTERDVETRCFICIEPLKVSAIPASTAFSCLAFPAIISRIDAYLISLQGCESLNFTVKLDLALEAFTKDSDNTDEHRAQQIHVQRGMGRNYERLEFLGDCFLKMATSIALFTQNPDDDEFDYHVNRMCLICNKNLFNAAVDKEIYKYIRSRGFSRHTWYPEGLKLLQGKDHSRKATTESKHALAEKTIADVCEALIGAALLSGGPDHRFDMAVKAVTTLVNSPSHKAERWKDYISFYTIPKYQRRAADGAELYLSRKIEEKLSYRFRYPTLLGSAFTHPSYPSAWAKVPCYQRLEFLGDSLIDMVCVEDLFARFPDRDPQWLTEHKMAMVSNKFLGALAVKLGLHTHLKYFSAPLQSQITQYAEEIQTAEGESEGAVDYWTVTKDPPKCLPDMVEAYVGAVFVDSDFNFEVIERFFRDYIKPFFEDMAIYDTFANKHPTTFLHNRLTNEFGCVNYCLKAGEMPSIDGAPAGVLAAVIVHDVVIAEGTATSGRYAKVKASEKALAVLDEISSAEFQRKFRCDCRESGDSARLDIGTAI.

The segment covering 37-52 (DLQEDDGSSDESDNDE) has biased composition (acidic residues). The interval 37 to 65 (DLQEDDGSSDESDNDEREDHSKTGVSQQR) is disordered. In terms of domain architecture, Helicase ATP-binding spans 124 to 305 (LFERAKVQNT…DEATRLEKLL (182 aa)). 137 to 144 (LDTGSGKT) provides a ligand contact to ATP. Residues 250–253 (DEAH) carry the DEAH box motif. The 167-residue stretch at 439 to 605 (QLSPKVQVLR…SFCRTLPEDR (167 aa)) folds into the Helicase C-terminal domain. The region spanning 641 to 731 (ATAILARYAS…NSIYHRRLPA (91 aa)) is the Dicer dsRNA-binding fold domain. Residues 881-1009 (ESLTYVRDND…ICIEPLKVSA (129 aa)) form the PAZ domain. 2 consecutive RNase III domains span residues 1032 to 1192 (LISL…LSGG) and 1243 to 1394 (SRKI…VDSD). Mg(2+) contacts are provided by glutamate 1283, aspartate 1380, and glutamate 1383. One can recognise a DRBM domain in the interval 1428-1496 (TFLHNRLTNE…SEKALAVLDE (69 aa)). 4 residues coordinate Zn(2+): cysteine 1440, histidine 1467, cysteine 1508, and cysteine 1510.

This sequence belongs to the helicase family. Dicer subfamily. The cofactor is Mg(2+). Mn(2+) serves as cofactor.

Its function is as follows. Dicer-like endonuclease involved in cleaving double-stranded RNA in the RNA interference (RNAi) pathway. Produces 21 to 25 bp dsRNAs (siRNAs) which target the selective destruction of homologous RNAs leading to sequence-specific suppression of gene expression, called post-transcriptional gene silencing (PTGS). Part of a broad host defense response against viral infection and transposons. This chain is Dicer-like protein 1 (dcl1), found in Aspergillus niger (strain ATCC MYA-4892 / CBS 513.88 / FGSC A1513).